Here is a 494-residue protein sequence, read N- to C-terminus: MNAPVKPSKLIKGATGDWEVVIGLEVHAQVASNAKLFSGASTEFGGAPNAHVSLVDAAMPGMLPVINEECVAQAVRTGLGLNAQINLRSVFDRKNYFYPDLPQGYQISQYKSPVVGEGVVEVDLPDGEGISVGIERLHLEQDAGKLLHDQHPTSTFVDLNRSGVALMEIVSKPDIRSSEQAKAYVSKLRTILRYLGTCDGDMEKGSLRADVNVSVRKPGGPLGTRCEIKNVNSIRFIGQAIEYEARRQIGILEDGGAIVQETRLFDAGKGETRSMRSKEEAHDYRYFPDPDLLPLEFSQDYVDALKAKLPELPDAKKARFMAEFGLSLEDAGVLVAERESAEFYEAVLAALGNQPRDGKLAANWVINELFGRLNKEGRDIAASPVSAAQLATIVELIGEGTISGKIAKDLFEIVWCEGGDPRELVETRGMKQVTDLGAIEKVVDDIIQANPDKVAQAQAKPALMGWFVGQVMKSSGGKANPQSVNDLLKSKLGL.

Belongs to the GatB/GatE family. GatB subfamily. In terms of assembly, heterotrimer of A, B and C subunits.

It carries out the reaction L-glutamyl-tRNA(Gln) + L-glutamine + ATP + H2O = L-glutaminyl-tRNA(Gln) + L-glutamate + ADP + phosphate + H(+). It catalyses the reaction L-aspartyl-tRNA(Asn) + L-glutamine + ATP + H2O = L-asparaginyl-tRNA(Asn) + L-glutamate + ADP + phosphate + 2 H(+). In terms of biological role, allows the formation of correctly charged Asn-tRNA(Asn) or Gln-tRNA(Gln) through the transamidation of misacylated Asp-tRNA(Asn) or Glu-tRNA(Gln) in organisms which lack either or both of asparaginyl-tRNA or glutaminyl-tRNA synthetases. The reaction takes place in the presence of glutamine and ATP through an activated phospho-Asp-tRNA(Asn) or phospho-Glu-tRNA(Gln). This is Aspartyl/glutamyl-tRNA(Asn/Gln) amidotransferase subunit B from Rhodopseudomonas palustris (strain BisA53).